The primary structure comprises 391 residues: Transposase for insertion sequence element IS905 (391 aa).

This sequence belongs to the transposase mutator family.

Its function is as follows. Required for the transposition of the insertion element. This is Transposase for insertion sequence element IS905 (tra905) from Lactococcus lactis subsp. lactis (strain IL1403) (Streptococcus lactis).